The chain runs to 236 residues: MAKYKRILLKLSGESLMGEKQYGIDEKRLAEYAAQIKEIHEQGVQIGIVIGGGNIFRGLSGANKGFDRVKGDQMGMLATVINSLALSSALVAAGVKARVLTAVRMEPIGEFYSKWKAIECMENGEIVIMSGGTGNPFFTTDTGSSLRGIEIEADVMLKGTRVDGIYTADPEKDPTATKFSDITYDEVLKRGLKVMDLTATCMCKENNLPIVVFDMDTVGNLKKVISGEEIGTVVHN.

10–13 is a binding site for ATP; the sequence is KLSG. G52 serves as a coordination point for UMP. ATP is bound by residues G53 and R57. Residues D72 and 133–140 each bind UMP; that span reads TGNPFFTT. ATP-binding residues include T160, Y166, and D169.

It belongs to the UMP kinase family. In terms of assembly, homohexamer.

It localises to the cytoplasm. The catalysed reaction is UMP + ATP = UDP + ADP. It participates in pyrimidine metabolism; CTP biosynthesis via de novo pathway; UDP from UMP (UMPK route): step 1/1. With respect to regulation, inhibited by UTP. Functionally, catalyzes the reversible phosphorylation of UMP to UDP. The polypeptide is Uridylate kinase (Bacteroides thetaiotaomicron (strain ATCC 29148 / DSM 2079 / JCM 5827 / CCUG 10774 / NCTC 10582 / VPI-5482 / E50)).